The chain runs to 443 residues: Structure-specific endonuclease subunit SLX1 homolog (443 aa).

Residues 1–27 (METFILSSDSDDDSGPPPSKRRTIEGI) form a disordered region. The GIY-YIG domain occupies 171–258 (EFYGVYCLIS…PLVSKSLKEK (88 aa)). The SLX1-type zinc-finger motif lies at 340–395 (CRICGKDIEKLWSLVRCISATCPSHFHSKCLSENGLKLKNEHVDHVYPLKANCPTC).

Belongs to the SLX1 family. In terms of assembly, forms a heterodimer with him-18/slx-4. Requires a divalent metal cation as cofactor.

It localises to the nucleus. Catalytic subunit of a heterodimeric structure-specific endonuclease that resolves DNA secondary structures generated during DNA repair and recombination. Has endonuclease activity towards branched DNA substrates, introducing single-strand cuts in duplex DNA close to junctions with ss-DNA (Potential). Has a preference for replication forks over 5' flap structures or Holliday junctions and shows much lower activity toward 3' flap structures. Required for proper crossover distribution through inhibition of crossover formation at the central region of chromosomes. This chain is Structure-specific endonuclease subunit SLX1 homolog, found in Caenorhabditis elegans.